The primary structure comprises 220 residues: Small ribosomal subunit protein uS3 (220 aa).

One can recognise a KH type-2 domain in the interval 39–107 (IREHVEGRLK…RVHINISEIK (69 aa)).

It belongs to the universal ribosomal protein uS3 family. Part of the 30S ribosomal subunit. Forms a tight complex with proteins S10 and S14.

In terms of biological role, binds the lower part of the 30S subunit head. Binds mRNA in the 70S ribosome, positioning it for translation. The protein is Small ribosomal subunit protein uS3 of Shouchella clausii (strain KSM-K16) (Alkalihalobacillus clausii).